Here is a 476-residue protein sequence, read N- to C-terminus: 3-isopropylmalate dehydratase large subunit (476 aa).

Residues Cys-353, Cys-413, and Cys-416 each coordinate [4Fe-4S] cluster.

Belongs to the aconitase/IPM isomerase family. LeuC type 1 subfamily. Heterodimer of LeuC and LeuD. The cofactor is [4Fe-4S] cluster.

It carries out the reaction (2R,3S)-3-isopropylmalate = (2S)-2-isopropylmalate. It functions in the pathway amino-acid biosynthesis; L-leucine biosynthesis; L-leucine from 3-methyl-2-oxobutanoate: step 2/4. Functionally, catalyzes the isomerization between 2-isopropylmalate and 3-isopropylmalate, via the formation of 2-isopropylmaleate. The chain is 3-isopropylmalate dehydratase large subunit from Photobacterium profundum (strain SS9).